We begin with the raw amino-acid sequence, 342 residues long: GTPase Obg (342 aa).

Residues 1–159 (MQFIDRAEIE…RNLRLELKLL (159 aa)) enclose the Obg domain. The OBG-type G domain maps to 160–328 (AEVGIIGLPN…LLQAIWHRLD (169 aa)). Residues 166–173 (GLPNAGKS), 191–195 (FTTLV), 213–216 (DIPG), 280–283 (NKVD), and 309–311 (SAV) contribute to the GTP site. 2 residues coordinate Mg(2+): serine 173 and threonine 193.

It belongs to the TRAFAC class OBG-HflX-like GTPase superfamily. OBG GTPase family. Monomer. It depends on Mg(2+) as a cofactor.

It is found in the cytoplasm. In terms of biological role, an essential GTPase which binds GTP, GDP and possibly (p)ppGpp with moderate affinity, with high nucleotide exchange rates and a fairly low GTP hydrolysis rate. Plays a role in control of the cell cycle, stress response, ribosome biogenesis and in those bacteria that undergo differentiation, in morphogenesis control. In Crocosphaera subtropica (strain ATCC 51142 / BH68) (Cyanothece sp. (strain ATCC 51142)), this protein is GTPase Obg.